The chain runs to 123 residues: MALKIRLSRGGAKKRPFYKIVVADARAPRDGRFIEKVGTYNPMLPNDNGQRWILDEDRVKHWLSVGAQPTDRLVRFFADKGLVAKPVRAEQTKQPQPKAKAQQRAKDQAERDAAAAAEAAAGE.

Residues 86–123 are disordered; that stretch reads PVRAEQTKQPQPKAKAQQRAKDQAERDAAAAAEAAAGE. Low complexity predominate over residues 93 to 102; that stretch reads KQPQPKAKAQ. A compositionally biased stretch (basic and acidic residues) spans 104–113; it reads RAKDQAERDA. A compositionally biased stretch (low complexity) spans 114–123; that stretch reads AAAAEAAAGE.

The protein belongs to the bacterial ribosomal protein bS16 family.

The protein is Small ribosomal subunit protein bS16 of Paramagnetospirillum magneticum (strain ATCC 700264 / AMB-1) (Magnetospirillum magneticum).